Consider the following 145-residue polypeptide: LIM domain only protein 3 (145 aa).

LIM zinc-binding domains lie at Lys-11–Val-73 and Gly-75–Lys-137.

In Danio rerio (Zebrafish), this protein is LIM domain only protein 3.